A 160-amino-acid polypeptide reads, in one-letter code: 3-hydroxyacyl-[acyl-carrier-protein] dehydratase FabZ (160 aa).

His-63 is an active-site residue.

It belongs to the thioester dehydratase family. FabZ subfamily.

It localises to the cytoplasm. The catalysed reaction is a (3R)-hydroxyacyl-[ACP] = a (2E)-enoyl-[ACP] + H2O. Functionally, involved in unsaturated fatty acids biosynthesis. Catalyzes the dehydration of short chain beta-hydroxyacyl-ACPs and long chain saturated and unsaturated beta-hydroxyacyl-ACPs. The protein is 3-hydroxyacyl-[acyl-carrier-protein] dehydratase FabZ of Xylella fastidiosa (strain M12).